We begin with the raw amino-acid sequence, 68 residues long: Conotoxin Cal14.13c (68 aa).

The signal sequence occupies residues 1-20 (MKLCVVXVLLMLAMPFNGGE). The propeptide occupies 21–68 (ASRFFNQHARSQRSGMKTRGIWCDPPCPEGETCRGGECSDEFNGDLGG). Leucine 66 carries the post-translational modification Leucine amide.

In terms of processing, contains 2 disulfide bonds. Expressed by the venom duct.

It is found in the secreted. Probable neurotoxin with unknown target. Possibly targets ion channels. The chain is Conotoxin Cal14.13c from Californiconus californicus (California cone).